The sequence spans 327 residues: MSELSDEEISLQALYDPSKKVIGDIEDGIFSTPELQPRIKTGIDNLQLVTKLVNQMRLFSSNEQIEDVPTNSLPYLLVPCFLGILHQNLMTEPGLKLDELRKSKIYMRNFLDRLRDLCLITTRLPWEDEDTEEQNLKEKPKLAVEEIRRLKLERHKKKQELKMAELRIQKQLEAVSIDEQNLRELYITQLLFWSERCYEELQAIDDELPLLKMMAERASHPHRHPAPPPATKTVPTLKPFIITRDAQQKQVFGLGYPGIPAMSVDEWYHQKFGHNPQNAPQSSAPAGAEAQESEEEVDDDEARAKAMRWDEYKDDHRRGWGNMHNKG.

A coiled-coil region spans residues 141–185; it reads KLAVEEIRRLKLERHKKKQELKMAELRIQKQLEAVSIDEQNLREL. The interval 271–327 is disordered; that stretch reads KFGHNPQNAPQSSAPAGAEAQESEEEVDDDEARAKAMRWDEYKDDHRRGWGNMHNKG. The segment covering 275-284 has biased composition (polar residues); sequence NPQNAPQSSA. Acidic residues predominate over residues 291 to 301; the sequence is QESEEEVDDDE. Residues 302–318 are compositionally biased toward basic and acidic residues; that stretch reads ARAKAMRWDEYKDDHRR.

In terms of assembly, serine/threonine-protein phosphatase 4 (PP4) occurs in different assemblies of the catalytic and one or more regulatory subunits. The catalytic subunit is likely to be pph-4.1.

Functionally, probable regulatory subunit of serine/threonine-protein phosphatase PP4 which may play a role in meiosis and embryonic mitosis. Probably in association with catalytic subunit pph-4.1, regulates microtubule severing during oocyte meiosis II by dephosphorylating and likely activating mei-1, a component of the katanin microtubule severing complex. The protein is Serine/threonine-protein phosphatase 4 regulatory subunit ppfr-4 of Caenorhabditis elegans.